The primary structure comprises 208 residues: Glutathione S-transferase 1-1 (208 aa).

The region spanning methionine 1 to aspartate 80 is the GST N-terminal domain. Residues serine 9, histidine 50–isoleucine 52, and glutamate 64–arginine 66 contribute to the glutathione site. The GST C-terminal domain maps to cysteine 86–phenylalanine 207.

It belongs to the GST superfamily. Theta family. Homodimer.

It carries out the reaction RX + glutathione = an S-substituted glutathione + a halide anion + H(+). Functionally, conjugation of reduced glutathione to a wide number of exogenous and endogenous hydrophobic electrophiles. In Lucilia cuprina (Green bottle fly), this protein is Glutathione S-transferase 1-1 (GST1).